Reading from the N-terminus, the 149-residue chain is Nucleoside diphosphate kinase (149 aa).

Residues K9, F57, R85, T91, R102, and N112 each coordinate ATP. Residue H115 is the Pros-phosphohistidine intermediate of the active site.

This sequence belongs to the NDK family. Homotetramer. Requires Mg(2+) as cofactor.

The protein localises to the cytoplasm. It catalyses the reaction a 2'-deoxyribonucleoside 5'-diphosphate + ATP = a 2'-deoxyribonucleoside 5'-triphosphate + ADP. It carries out the reaction a ribonucleoside 5'-diphosphate + ATP = a ribonucleoside 5'-triphosphate + ADP. Its function is as follows. Major role in the synthesis of nucleoside triphosphates other than ATP. The ATP gamma phosphate is transferred to the NDP beta phosphate via a ping-pong mechanism, using a phosphorylated active-site intermediate. This chain is Nucleoside diphosphate kinase, found in Microcystis aeruginosa (strain NIES-843 / IAM M-2473).